A 2273-amino-acid polypeptide reads, in one-letter code: Retinal-specific phospholipid-transporting ATPase ABCA4 (2273 aa).

The Cytoplasmic segment spans residues 1–21 (MGFVRQIQLLLWKNWTLRKRQ). Residues 22–42 (KIRFVVELVWPLSLFLVLIWL) traverse the membrane as a helical segment. The Extracellular segment spans residues 43–646 (RNANPLYSHH…MPYPCFVDDS (604 aa)). 2 disulfide bridges follow: cysteine 54/cysteine 81 and cysteine 75/cysteine 324. A glycan (N-linked (GlcNAc...) asparagine) is linked at asparagine 98. Mg(2+) contacts are provided by serine 336 and asparagine 338. Residues cysteine 370 and cysteine 519 are joined by a disulfide bond. N-linked (GlcNAc...) asparagine glycans are attached at residues asparagine 415, asparagine 444, and asparagine 504. The an N-all-trans-retinylidenephosphatidylethanolamine site is built by arginine 587 and arginine 653. 3 disulfides stabilise this stretch: cysteine 641–cysteine 1490, cysteine 1444–cysteine 1455, and cysteine 1488–cysteine 1502. Residues 647 to 667 (FMIILNRCFPIFMVLAWIYSV) traverse the membrane as a helical segment. Residues 668-699 (SMTVKSIVLEKELRLKETLKNQGVSNAVIWCT) are Cytoplasmic-facing. The chain crosses the membrane as a helical span at residues 700–720 (WFLDSFSIMSMSIFLLTIFIM). Over 721 to 730 (HGRILHYSDP) the chain is Extracellular. Residues 731 to 751 (FILFLFLLAFSTATIMLCFLL) form a helical membrane-spanning segment. Over 752-759 (STFFSKAS) the chain is Cytoplasmic. The chain crosses the membrane as a helical span at residues 760–780 (LAAACSGVIYFTLYLPHILCF). The Extracellular portion of the chain corresponds to 781-835 (AWQDRMTAELKKAVSLLSPVAFGFGTEYLVRFEEQGLGLQWSNIGNSPTEGDEFS). A helical membrane pass occupies residues 836–856 (FLLSMQMMLLDAAVYGLLAWY). Residues 857–1376 (LDQVFPGDYG…IRSHKDFLAQ (520 aa)) are Cytoplasmic-facing. Residues 891–911 (ERALEKTEPLTEETEDPEHPE) are disordered. Threonine 901 is modified (phosphothreonine). Residues 929–1160 (VCVKNLVKIF…FGTGLYLTLV (232 aa)) enclose the ABC transporter 1 domain. 3 residues coordinate ATP: phenylalanine 938, glycine 966, and lysine 969. Residue threonine 970 coordinates Mg(2+). ATP is bound by residues threonine 971, glutamine 1010, lysine 1054, glycine 1064, glycine 1065, and histidine 1118. Serine 1185 bears the Phosphoserine mark. The segment at 1284 to 1345 (PLFAGGAQQK…EPECPGPQLN (62 aa)) is disordered. Threonine 1313 carries the phosphothreonine modification. Position 1317 is a phosphoserine (serine 1317). A compositionally biased stretch (pro residues) spans 1331-1340 (GQPPPEPECP). Residues 1377 to 1397 (IVLPATFVFLALMLSIVIPPF) traverse the membrane as a helical segment. Topologically, residues 1398–1727 (GEYPALTLHP…VSPTTYWVTN (330 aa)) are extracellular. Asparagine 1469 is a glycosylation site (N-linked (GlcNAc...) asparagine). Residues asparagine 1529, asparagine 1588, and asparagine 1662 are each glycosylated (N-linked (GlcNAc...) asparagine). Residues 1728-1748 (FLWDIMNYSVSAGLVVGIFIG) traverse the membrane as a helical segment. Topologically, residues 1749 to 1759 (FQKKAYTSPEN) are cytoplasmic. Residues 1760–1780 (LPALVALLLLYGWAVIPMMYP) form a helical membrane-spanning segment. Residues 1781–1792 (ASFLFDVPSTAY) are Extracellular-facing. Residues 1793–1813 (VALSCANLFIGINSSAITFIL) form a helical membrane-spanning segment. Residues 1814 to 1831 (ELFENNRTLLRFNAVLRK) lie on the Cytoplasmic side of the membrane. The chain crosses the membrane as a helical span at residues 1832-1852 (LLIVFPHFCLGRGLIDLALSQ). The Extracellular portion of the chain corresponds to 1853-1873 (AVTDVYARFGEEHSANPFHWD). A helical transmembrane segment spans residues 1874-1894 (LIGKNLFAMVVEGVVYFLLTL). Residues 1895–2273 (LVQRHFFLSQ…AAGASRQAQD (379 aa)) lie on the Cytoplasmic side of the membrane. The ABC transporter 2 domain occupies 1938 to 2170 (LRLHELTKIY…FGDGYIVTMK (233 aa)). ATP-binding residues include asparagine 1974, glycine 1975, lysine 1978, threonine 1979, threonine 1980, and glycine 2073. Position 1979 (threonine 1979) interacts with Mg(2+). The tract at residues 2244 to 2249 (VFVNFA) is essential for ATP binding and ATPase activity.

This sequence belongs to the ABC transporter superfamily. ABCA family. In terms of processing, proteolytic cleavage by trypsin leads to a 120-kDa N-terminal fragment and a 115-kDa C-terminal fragment that are linked through disulfide bonds. N-glycosylated. Post-translationally, phosphorylation is independent of light exposure and modulates ATPase activity. Retinal-specific. Seems to be exclusively found in the rims of rod photoreceptor cells.

It localises to the membrane. The protein resides in the endoplasmic reticulum. Its subcellular location is the cytoplasmic vesicle. It is found in the cell projection. The protein localises to the cilium. It localises to the photoreceptor outer segment. The catalysed reaction is an N-all-trans-retinylidenephosphatidylethanolamine(out) + ATP + H2O = an N-all-trans-retinylidenephosphatidylethanolamine(in) + ADP + phosphate + H(+). It carries out the reaction ATP + H2O + phospholipidSide 1 = ADP + phosphate + phospholipidSide 2.. The enzyme catalyses a 1,2-diacyl-sn-glycero-3-phosphoethanolamine(out) + ATP + H2O = a 1,2-diacyl-sn-glycero-3-phosphoethanolamine(in) + ADP + phosphate + H(+). It catalyses the reaction N-11-cis-retinylidenephosphatidylethanolamine(out) + ATP + H2O = N-11-cis-retinylidenephosphatidylethanolamine(in) + ADP + phosphate + H(+). The catalysed reaction is ATP + H2O = ADP + phosphate + H(+). ATPase activity is decreased by cholesterol and ceramide. Phospholipids translocase activity is highly reduced by berylium fluoride and aluminum floride. N-ethylmaleimide inhibits phospholipid translocase activity. Its function is as follows. Flippase that catalyzes in an ATP-dependent manner the transport of retinal-phosphatidylethanolamine conjugates like 11-cis and all-trans isomers of N-retinylidene-phosphatidylethanolamine (N-Ret-PE) from the lumen to the cytoplasmic leaflet of photoreceptor outer segment disk membranes, where 11-cis-retinylidene-phosphatidylethanolamine is then isomerized to its all-trans isomer and reduced by RDH8 to produce all-trans-retinol. This transport activity ensures that all-trans-retinal generated from photoexcitation and 11-cis-retinal not needed for the regeneration of rhodopsin and cone opsins are effectively cleared from the photoreceptors, therefore preventing their accumulation and the formation of toxic bisretinoid. Displays ATPase activity in vitro in absence of retinal substrate. May display GTPase activity that is strongly influenced by the lipid environment and the presence of retinoid compounds. Binds the unprotonated form of N-retinylidene-phosphatidylethanolamine with high affinity in the absence of ATP, and ATP binding and hydrolysis induce a protein conformational change that causes N-retinylidene-phosphatidylethanolamine release. The polypeptide is Retinal-specific phospholipid-transporting ATPase ABCA4 (Homo sapiens (Human)).